A 155-amino-acid chain; its full sequence is Ribosomal RNA large subunit methyltransferase H (155 aa).

S-adenosyl-L-methionine contacts are provided by residues Leu73, Gly104, and 123–128; that span reads ISKMTF.

It belongs to the RNA methyltransferase RlmH family. In terms of assembly, homodimer.

The protein resides in the cytoplasm. The catalysed reaction is pseudouridine(1915) in 23S rRNA + S-adenosyl-L-methionine = N(3)-methylpseudouridine(1915) in 23S rRNA + S-adenosyl-L-homocysteine + H(+). In terms of biological role, specifically methylates the pseudouridine at position 1915 (m3Psi1915) in 23S rRNA. This Francisella tularensis subsp. novicida (strain U112) protein is Ribosomal RNA large subunit methyltransferase H.